A 172-amino-acid polypeptide reads, in one-letter code: Centrin-1 (172 aa).

The interval 1–30 (MASSYRKPTVASTSQKRKVGPKPELTEEQK) is disordered. EF-hand domains are found at residues 28-63 (EQKQ…LGFE), 64-99 (PRKE…KMAE), 101-136 (DTKE…LGEN), and 137-172 (LTDE…TNLY). Ca(2+)-binding residues include aspartate 41, aspartate 43, serine 45, threonine 47, and glutamate 52. The Ca(2+) site is built by aspartate 150, aspartate 152, aspartate 154, glutamate 156, and glutamate 161.

This sequence belongs to the centrin family. As to quaternary structure, monomer. Interacts with CIMAP3. Interacts with USP49.

It localises to the cytoplasm. The protein localises to the cytoskeleton. The protein resides in the microtubule organizing center. Its subcellular location is the centrosome. Functionally, plays a fundamental role in microtubule-organizing center structure and function. Plays a role in sperm cilia formation. This chain is Centrin-1 (CETN1), found in Bos taurus (Bovine).